A 174-amino-acid polypeptide reads, in one-letter code: MPDSADAPEEVPEFVDIVLEDDRWEDADLPAMAERAARAVGEWLGLDAFQVVVMGCDDARIAALNAEFRGKPKPTNVLSWPAVEFEAREPGAHPEPPGAEELGDIAISYDTCLREAEAQGKPFADHATHLLVHAMLHLAGYDHIDDEDAETMEDAERSILGKLGIPDPYLEHET.

The Zn(2+) site is built by H133, H137, and H143.

It belongs to the endoribonuclease YbeY family. Requires Zn(2+) as cofactor.

The protein localises to the cytoplasm. In terms of biological role, single strand-specific metallo-endoribonuclease involved in late-stage 70S ribosome quality control and in maturation of the 3' terminus of the 16S rRNA. This Paracoccus denitrificans (strain Pd 1222) protein is Endoribonuclease YbeY.